The following is a 222-amino-acid chain: Millepora cytotoxin-1 (222 aa).

The signal sequence occupies residues Met1–Ala20. Residues Ala21–Arg75 constitute a propeptide that is removed on maturation. Disulfide bonds link Cys89-Cys115, Cys142-Cys168, and Cys179-Cys222. 3 repeats span residues Ser100–Arg109, Ser153–Arg162, and Ser206–Arg215.

This sequence belongs to the dermatopontin family. Post-translationally, is not glycosylated.

The protein resides in the secreted. Its subcellular location is the nematocyst. Is potently cytotoxic (EC(50) value 79 ng/mL) towards L1210 mouse leukemia cells, has hemagglutination activity on sheep erythrocytes, and is lethal in crayfish. Has no phospholipase A2 activity. The polypeptide is Millepora cytotoxin-1 (Millepora dichotoma (Net fire coral)).